The sequence spans 351 residues: Putative ABC transporter permease protein MJ0876 (351 aa).

9 consecutive transmembrane segments (helical) span residues 4-24 (VGILLILFILSLILPFTALYL), 59-79 (LPPIIGAVLIGLTISVAGLML), 99-119 (VLMVVALVIFIDSLSHLFEIF), 124-144 (ILVAGWCGGIFSMILLIIIAL), 152-172 (VIIVALLLSYFFMGLRAYLIA), 196-216 (GDVIPMTICSIIFIIGVMFLI), 249-269 (FITGAIIPYVGLIAFIGIIAP), 284-304 (LVPATMFLGVILMVSCHILSL), and 322-342 (PLPIGAVLDILGGMLVVYLVY).

It belongs to the binding-protein-dependent transport system permease family. FecCD subfamily.

The protein localises to the cell membrane. In terms of biological role, probably part of a binding-protein-dependent transport system. Probably responsible for the translocation of the substrate across the membrane. The polypeptide is Putative ABC transporter permease protein MJ0876 (Methanocaldococcus jannaschii (strain ATCC 43067 / DSM 2661 / JAL-1 / JCM 10045 / NBRC 100440) (Methanococcus jannaschii)).